The primary structure comprises 209 residues: Uracil phosphoribosyltransferase (209 aa).

5-phospho-alpha-D-ribose 1-diphosphate contacts are provided by residues arginine 79, arginine 104, and 131-139; that span reads DPMLATGGS. Uracil-binding positions include isoleucine 194 and 199–201; that span reads GDA. 5-phospho-alpha-D-ribose 1-diphosphate is bound at residue aspartate 200.

The protein belongs to the UPRTase family. Mg(2+) is required as a cofactor.

The enzyme catalyses UMP + diphosphate = 5-phospho-alpha-D-ribose 1-diphosphate + uracil. The protein operates within pyrimidine metabolism; UMP biosynthesis via salvage pathway; UMP from uracil: step 1/1. Its activity is regulated as follows. Allosterically activated by GTP. Functionally, catalyzes the conversion of uracil and 5-phospho-alpha-D-ribose 1-diphosphate (PRPP) to UMP and diphosphate. The sequence is that of Uracil phosphoribosyltransferase from Alkaliphilus metalliredigens (strain QYMF).